Here is a 358-residue protein sequence, read N- to C-terminus: uncharacterized protein (358 aa).

The Zn(2+) site is built by cysteine 39, histidine 61, cysteine 92, cysteine 95, cysteine 98, cysteine 106, and aspartate 157.

This sequence belongs to the zinc-containing alcohol dehydrogenase family. Zn(2+) is required as a cofactor.

This is an uncharacterized protein from Escherichia coli (strain K12).